The sequence spans 183 residues: MSDEEKKRRAATARRQHLKSAMLQLAVTEIEKEAAAKEVEKQNYLAEHCPPLSLPGSMQELQELCKKLHAKIDSVDEERYDTEVKLQKTNKELEDLSQKLFDLRGKFKRPPLRRVRMSADAMLRALLGSKHKVNMDLRANLKQVKKEDTEKEKDLRDVGDWRKNIEEKSGMEGRKKMFEAGES.

The residue at position 2 (serine 2) is an N-acetylserine. The involved in binding TNC stretch occupies residues 2-48; it reads SDEEKKRRAATARRQHLKSAMLQLAVTEIEKEAAAKEVEKQNYLAEH. Residues 97-117 are involved in binding TNC and actin; sequence SQKLFDLRGKFKRPPLRRVRM.

Belongs to the troponin I family. Binds to actin and tropomyosin. Post-translationally, the N-terminus is blocked.

In terms of biological role, troponin I is the inhibitory subunit of troponin, the thin filament regulatory complex which confers calcium-sensitivity to striated muscle actomyosin ATPase activity. In Gallus gallus (Chicken), this protein is Troponin I, fast skeletal muscle (TNNI2).